We begin with the raw amino-acid sequence, 150 residues long: Ankyrin repeat protein C18/B24 (150 aa).

One copy of the ANK repeat lies at 41–73 (ENKTLLYYAVDVNNIQFAKRLLEYGASVTTSRS).

The protein is Ankyrin repeat protein C18/B24 of Vaccinia virus (strain Copenhagen) (VACV).